The sequence spans 171 residues: Nicotinamide-nucleotide adenylyltransferase (171 aa).

Belongs to the archaeal NMN adenylyltransferase family.

It is found in the cytoplasm. The catalysed reaction is beta-nicotinamide D-ribonucleotide + ATP + H(+) = diphosphate + NAD(+). The protein operates within cofactor biosynthesis; NAD(+) biosynthesis; NAD(+) from nicotinamide D-ribonucleotide: step 1/1. This Ignicoccus hospitalis (strain KIN4/I / DSM 18386 / JCM 14125) protein is Nicotinamide-nucleotide adenylyltransferase.